We begin with the raw amino-acid sequence, 210 residues long: Adenylate kinase (210 aa).

ATP is bound at residue 10–15 (GSGKGT). Positions 30-59 (STGDLFRANISNATPLGKEIKQIVENGQLV) are NMP. Residues threonine 31, arginine 36, 57 to 59 (QLV), 85 to 88 (GFPR), and glutamine 92 contribute to the AMP site. The segment at 121 to 158 (GRRICQSCGGIFNIYTLPTKEKGICDLCKGSLYQRKDD) is LID. ATP is bound at residue arginine 122. Zn(2+) contacts are provided by cysteine 125 and cysteine 128. Residue 131–132 (IF) coordinates ATP. Zn(2+)-binding residues include cysteine 145 and cysteine 148. The AMP site is built by arginine 155 and arginine 166. Residue lysine 194 coordinates ATP.

Belongs to the adenylate kinase family. In terms of assembly, monomer.

It localises to the cytoplasm. It catalyses the reaction AMP + ATP = 2 ADP. The protein operates within purine metabolism; AMP biosynthesis via salvage pathway; AMP from ADP: step 1/1. Catalyzes the reversible transfer of the terminal phosphate group between ATP and AMP. Plays an important role in cellular energy homeostasis and in adenine nucleotide metabolism. This Borrelia turicatae (strain 91E135) protein is Adenylate kinase.